We begin with the raw amino-acid sequence, 187 residues long: Peptidyl-tRNA hydrolase (187 aa).

Tyr-14 provides a ligand contact to tRNA. The active-site Proton acceptor is His-19. Residues Phe-60 and Asn-62 each coordinate tRNA.

It belongs to the PTH family. As to quaternary structure, monomer.

The protein localises to the cytoplasm. The catalysed reaction is an N-acyl-L-alpha-aminoacyl-tRNA + H2O = an N-acyl-L-amino acid + a tRNA + H(+). In terms of biological role, hydrolyzes ribosome-free peptidyl-tRNAs (with 1 or more amino acids incorporated), which drop off the ribosome during protein synthesis, or as a result of ribosome stalling. Its function is as follows. Catalyzes the release of premature peptidyl moieties from peptidyl-tRNA molecules trapped in stalled 50S ribosomal subunits, and thus maintains levels of free tRNAs and 50S ribosomes. The polypeptide is Peptidyl-tRNA hydrolase (Pseudothermotoga lettingae (strain ATCC BAA-301 / DSM 14385 / NBRC 107922 / TMO) (Thermotoga lettingae)).